We begin with the raw amino-acid sequence, 125 residues long: Desulfoferrodoxin (125 aa).

The Fe cation site is built by H49, H69, H75, C115, and H118.

It belongs to the desulfoferrodoxin family. Cu(2+) serves as cofactor.

The catalysed reaction is reduced [rubredoxin] + superoxide + 2 H(+) = oxidized [rubredoxin] + H2O2. Catalyzes the reduction of superoxide to hydrogen peroxide, using electrons from NADH and NADH:rubredoxin oxidoreductase (NROR) and rubredoxin (Rd) as electron transport intermediaries between NADH and Dfx. Is a key factor in the superoxide reductase dependent part of a pathway for detoxification of reactive oxygen species (ROS) in C.acetobutylicum, an obligate anaerobic bacterium. This Clostridium acetobutylicum (strain ATCC 824 / DSM 792 / JCM 1419 / IAM 19013 / LMG 5710 / NBRC 13948 / NRRL B-527 / VKM B-1787 / 2291 / W) protein is Desulfoferrodoxin (dfx).